Consider the following 576-residue polypeptide: MNIQALLSDKVSQALIAAGAPADCEAQVRQSAKAQFGDYQANGVMAVAKKLGMQPRQLAERVVELLDLTGIASKIEIAGPGFINIFLDRQWVAEKVEYALTAPKLGVAPVEPQTIVVDYSAPNVAKQMHVGHLRSTIIGDAAVRTLAFLGHNVIRANHVGDWGTQFGMLIAYLEKMQNENASDMGLSDLELFYQQAKKTYDEDEEFALRARAYVVKLQSGDEYCRQMWRKLVDITMAQNQVAYDRLNVTLTKDDVMGESLYNAMLPEIVADLKAKGLAVESEGATVVYLDEYKNKDGEPMGVIIQKKDGGYLYTTTDIACAKYRYETLGADRILYYIDSRQHQHLMQAWAIVRKAGYVPESVPLEHHMFGMMLGKDGKPFKTRSGGTVKLSDLLDEAVERAGKLIAEKNPDMPADELKQVINAVGIGAVKYADLSKSRTTDYIFDWDNMLALDGNTAPYMQYAYTRVVSVFRRAGVDENSLTLPLVITEDREAALATRLLQFEEIITTVAREGTPHVMCSYLYDLAGLFSSFYEHCQILNAESEEIRQSRLKLAMLTAKTLKQGLDTLGIQTVERM.

The 'HIGH' region motif lies at 122-132 (PNVAKQMHVGH).

The protein belongs to the class-I aminoacyl-tRNA synthetase family. As to quaternary structure, monomer.

It is found in the cytoplasm. It catalyses the reaction tRNA(Arg) + L-arginine + ATP = L-arginyl-tRNA(Arg) + AMP + diphosphate. This is Arginine--tRNA ligase from Yersinia pseudotuberculosis serotype O:1b (strain IP 31758).